A 159-amino-acid polypeptide reads, in one-letter code: Putative polyketide cyclase (159 aa).

The protein to polyketide cyclases.

Functionally, involved in developmentally regulated synthesis of a compound biosynthetically related to polyketide antibiotics which is essential for spore color in Streptomyces coelicolor. The protein is Putative polyketide cyclase of Streptomyces coelicolor (strain ATCC BAA-471 / A3(2) / M145).